The chain runs to 183 residues: Acireductone dioxygenase (183 aa).

4 residues coordinate Fe(2+): His95, His97, Glu101, and His139. Ni(2+) is bound by residues His95, His97, Glu101, and His139.

This sequence belongs to the acireductone dioxygenase (ARD) family. In terms of assembly, monomer. The cofactor is Fe(2+). Requires Ni(2+) as cofactor.

It carries out the reaction 1,2-dihydroxy-5-(methylsulfanyl)pent-1-en-3-one + O2 = 3-(methylsulfanyl)propanoate + CO + formate + 2 H(+). It catalyses the reaction 1,2-dihydroxy-5-(methylsulfanyl)pent-1-en-3-one + O2 = 4-methylsulfanyl-2-oxobutanoate + formate + 2 H(+). It participates in amino-acid biosynthesis; L-methionine biosynthesis via salvage pathway; L-methionine from S-methyl-5-thio-alpha-D-ribose 1-phosphate: step 5/6. Catalyzes 2 different reactions between oxygen and the acireductone 1,2-dihydroxy-3-keto-5-methylthiopentene (DHK-MTPene) depending upon the metal bound in the active site. Fe-containing acireductone dioxygenase (Fe-ARD) produces formate and 2-keto-4-methylthiobutyrate (KMTB), the alpha-ketoacid precursor of methionine in the methionine recycle pathway. Ni-containing acireductone dioxygenase (Ni-ARD) produces methylthiopropionate, carbon monoxide and formate, and does not lie on the methionine recycle pathway. This is Acireductone dioxygenase from Aquifex aeolicus (strain VF5).